The chain runs to 582 residues: Proline--tRNA ligase (582 aa).

Belongs to the class-II aminoacyl-tRNA synthetase family. ProS type 1 subfamily. Homodimer.

The protein localises to the cytoplasm. The enzyme catalyses tRNA(Pro) + L-proline + ATP = L-prolyl-tRNA(Pro) + AMP + diphosphate. Functionally, catalyzes the attachment of proline to tRNA(Pro) in a two-step reaction: proline is first activated by ATP to form Pro-AMP and then transferred to the acceptor end of tRNA(Pro). As ProRS can inadvertently accommodate and process non-cognate amino acids such as alanine and cysteine, to avoid such errors it has two additional distinct editing activities against alanine. One activity is designated as 'pretransfer' editing and involves the tRNA(Pro)-independent hydrolysis of activated Ala-AMP. The other activity is designated 'posttransfer' editing and involves deacylation of mischarged Ala-tRNA(Pro). The misacylated Cys-tRNA(Pro) is not edited by ProRS. In Mycolicibacterium paratuberculosis (strain ATCC BAA-968 / K-10) (Mycobacterium paratuberculosis), this protein is Proline--tRNA ligase.